The chain runs to 151 residues: UPF0178 protein YaiI (151 aa).

This sequence belongs to the UPF0178 family.

The polypeptide is UPF0178 protein YaiI (Salmonella enteritidis PT4 (strain P125109)).